Here is a 341-residue protein sequence, read N- to C-terminus: Probable GDP-mannose transporter 2 (341 aa).

The Cytoplasmic segment spans residues 1-11 (MSKHKHEWTES). A helical transmembrane segment spans residues 12–32 (VANSGPASILSYCASSILMTV). Over 33 to 46 (TNKFVVNLDNFNMN) the chain is Lumenal. The helical transmembrane segment at 47–67 (FVMLFVQSLVCTVTLCILRIV) threads the bilayer. Topologically, residues 68–85 (GVANFRSLNRTDVKNWFP) are cytoplasmic. The chain crosses the membrane as a helical span at residues 86–106 (ISLLLVLMIYTSLKSLQYLAV). A topological domain (lumenal) is located at residue proline 107. A helical membrane pass occupies residues 108-128 (IYTIFKNLTIILIAYGEVLFF). Topologically, residues 129–139 (GGKVTSMELTS) are cytoplasmic. Residues 140–160 (FIMMVLSSVVATWGDQQAIAI) traverse the membrane as a helical segment. The Lumenal segment spans residues 161-176 (KASSLEDLDQELVEST). The helical transmembrane segment at 177 to 197 (IFVLNPGYLWMFTNCISSALF) threads the bilayer. The Cytoplasmic segment spans residues 198 to 214 (VLIMRKRIRLTNFKDYD). The chain crosses the membrane as a helical span at residues 215–235 (TMFYNNVLALPLLLVFSFIME). The Lumenal portion of the chain corresponds to 236–251 (DWSTKNLSVNLSADSL). N-linked (GlcNAc...) asparagine glycosylation is found at asparagine 241 and asparagine 245. The helical transmembrane segment at 252–272 (AAMVISGLMSVGISYCSGWCV) threads the bilayer. Residues 273 to 278 (RVTSST) are Cytoplasmic-facing. A helical transmembrane segment spans residues 279–299 (TYSMVGALNKLPIALAGLVFF). Residues 300 to 303 (DAPK) lie on the Lumenal side of the membrane. Residues 304 to 324 (NFLSFFSIFLGFLSGLLYAVA) traverse the membrane as a helical segment. Residues 325–341 (KQKKIQQQKVLAATLEK) lie on the Cytoplasmic side of the membrane.

Belongs to the TPT transporter family. SLC35D subfamily.

Its subcellular location is the golgi apparatus membrane. The protein resides in the cytoplasmic vesicle membrane. It is found in the endoplasmic reticulum membrane. Involved in the import of GDP-mannose from the cytoplasm into the Golgi lumen. This chain is Probable GDP-mannose transporter 2 (HVG1), found in Saccharomyces cerevisiae (strain Lalvin EC1118 / Prise de mousse) (Baker's yeast).